The following is a 2532-amino-acid chain: Lovastatin diketide synthase lovF (2532 aa).

A Ketosynthase family 3 (KS3) domain is found at 10–430; that stretch reads PAPIAMVGMG…GANAHAIVEQ (421 aa). Active-site for beta-ketoacyl synthase activity residues include C183, H318, and H353. The segment at 545 to 870 is malonyl-CoA:ACP transacylase (MAT) domain; sequence VFTGQGAQWF…PYLSCLSRGK (326 aa). Residue S635 is the For malonyltransferase activity of the active site. Residues 941-1078 form an N-terminal hotdog fold region; sequence HDLIGLQEPL…GLVRAEMDQP (138 aa). The tract at residues 941 to 1246 is dehydratase (DH) domain; sequence HDLIGLQEPL…LEGLVFQSLG (306 aa). Residues 941 to 1251 form the PKS/mFAS DH domain; that stretch reads HDLIGLQEPL…FQSLGASLGT (311 aa). H973 (proton acceptor; for dehydratase activity) is an active-site residue. Residues 1075 to 1094 form a disordered region; sequence MDQPPSSLSNQQRIDPRPWS. Residues 1078-1087 show a composition bias toward polar residues; sequence PPSSLSNQQR. The segment at 1092–1251 is C-terminal hotdog fold; the sequence is PWSRKTAPQE…FQSLGASLGT (160 aa). D1159 serves as the catalytic Proton donor; for dehydratase activity. Positions 1423 to 1607 are methyltransferase (CMet) domain; that stretch reads ELVRLCCHKN…ARDCDSHEFY (185 aa). The tract at residues 1825-2144 is enoylreductase (ER) domain; the sequence is GLLDSLHFTK…SGQHVGKIVV (320 aa). A ketoreductase (KR) domain region spans residues 2168-2340; that stretch reads SYLVAGGLGG…AVTIDLGMVQ (173 aa). Residues 2453 to 2530 enclose the Carrier domain; that stretch reads ESIAVIMEAM…KVAEVVLQRY (78 aa). S2490 is modified (O-(pantetheine 4'-phosphoryl)serine).

As to quaternary structure, interacts with LovD. Pantetheine 4'-phosphate is required as a cofactor.

It catalyses the reaction holo-[2-methylbutanoate polyketide synthase] + 2 malonyl-CoA + S-adenosyl-L-methionine + 2 NADPH + 3 H(+) = (S)-2-methylbutanoyl-[2-methylbutanoate polyketide synthase] + S-adenosyl-L-homocysteine + 2 CO2 + 2 NADP(+) + 2 CoA + H2O. Its pathway is polyketide biosynthesis; lovastatin biosynthesis. Functionally, lovastatin diketide synthase; part of the gene cluster that mediates the biosynthesis of lovastatin (also known as mevinolin, mevacor or monacolin K), a hypolipidemic inhibitor of (3S)-hydroxymethylglutaryl-coenzyme A (HMG-CoA) reductase (HMGR). The first step in the biosynthesis of lovastatin is the production of dihydromonacolin L acid by the lovastatin nonaketide synthase lovB and the trans-acting enoyl reductase lovC via condensation of one acetyl-CoA unit and 8 malonyl-CoA units. Dihydromonacolin L acid is released from lovB by the thioesterase lovG. Next, dihydromonacolin L acid is oxidized by the dihydromonacolin L monooxygenase lovA twice to form monacolin J acid. The 2-methylbutyrate moiety of lovastatin is synthesized by the lovastatin diketide synthase lovF via condensation of one acetyl-CoA unit and one malonyl-CoA unit. Finally, the covalent attachment of this moiety to monacolin J acid is catalyzed by the transesterase lovD to yield lovastatin. LovD has broad substrate specificity and can also convert monacolin J to simvastatin using alpha-dimethylbutanoyl-S-methyl-3-mercaptopropionate (DMB-S-MMP) as the thioester acyl donor, and can also catalyze the reverse reaction and function as hydrolase in vitro. LovD has much higher activity with LovF-bound 2-methylbutanoate than with free diketide substrates. The polypeptide is Lovastatin diketide synthase lovF (Aspergillus terreus).